A 536-amino-acid polypeptide reads, in one-letter code: DEAD-box ATP-dependent RNA helicase 41 (536 aa).

The span at 1–10 (MEQEENHSAD) shows a compositional bias: basic and acidic residues. The disordered stretch occupies residues 1-25 (MEQEENHSADHLSAQPGNGNELEES). Residues 40-69 (GEPRCVICGRYGEYICDQTDDDICSVECKT) form an HIT-type zinc finger. The Q motif motif lies at 137-165 (MCFSSSGLPEKLVLNLEAAGYVMPTPVQM). The Helicase ATP-binding domain occupies 168–344 (IPSSICNRSL…NSLAKNAIHI (177 aa)). 181–188 (ADTGSGKT) contributes to the ATP binding site. The DEAD box motif lies at 293–296 (DEVD). A Helicase C-terminal domain is found at 355 to 518 (SVKQVVIWVE…PIPRELANSK (164 aa)).

Belongs to the DEAD box helicase family. DDX59 subfamily.

It carries out the reaction ATP + H2O = ADP + phosphate + H(+). This chain is DEAD-box ATP-dependent RNA helicase 41, found in Oryza sativa subsp. japonica (Rice).